The primary structure comprises 552 residues: Arginine--tRNA ligase (552 aa).

Residues 123-133 (ANPTGPLTIGR) carry the 'HIGH' region motif.

The protein belongs to the class-I aminoacyl-tRNA synthetase family. As to quaternary structure, monomer.

Its subcellular location is the cytoplasm. It carries out the reaction tRNA(Arg) + L-arginine + ATP = L-arginyl-tRNA(Arg) + AMP + diphosphate. The polypeptide is Arginine--tRNA ligase (Chlorobium phaeovibrioides (strain DSM 265 / 1930) (Prosthecochloris vibrioformis (strain DSM 265))).